We begin with the raw amino-acid sequence, 185 residues long: uncharacterized protein (185 aa).

Transmembrane regions (helical) follow at residues 9 to 29, 72 to 92, and 111 to 131; these read LVAA…WAFL, VLFF…ILIV, and FFFI…IPFL.

The protein resides in the cell membrane. This is an uncharacterized protein from Bacillus subtilis (strain 168).